Reading from the N-terminus, the 441-residue chain is Probable pyridine nucleotide-disulfide oxidoreductase RclA (441 aa).

33–43 (EQSNAMYGGTC) contacts FAD. Residues C43 and C48 are joined by a disulfide bond. The active-site Proton acceptor is the H426.

This sequence belongs to the class-I pyridine nucleotide-disulfide oxidoreductase family. FAD is required as a cofactor.

Functionally, probably involved in reactive chlorine species (RCS) stress resistance. The chain is Probable pyridine nucleotide-disulfide oxidoreductase RclA (rclA) from Escherichia coli (strain K12).